The chain runs to 392 residues: DNA-directed RNA polymerase subunit Rpo1C (392 aa).

The protein belongs to the RNA polymerase beta' chain family. As to quaternary structure, part of the RNA polymerase complex.

The protein resides in the cytoplasm. It carries out the reaction RNA(n) + a ribonucleoside 5'-triphosphate = RNA(n+1) + diphosphate. In terms of biological role, DNA-dependent RNA polymerase (RNAP) catalyzes the transcription of DNA into RNA using the four ribonucleoside triphosphates as substrates. Forms part of the jaw domain. In Saccharolobus islandicus (strain Y.N.15.51 / Yellowstone #2) (Sulfolobus islandicus), this protein is DNA-directed RNA polymerase subunit Rpo1C.